A 513-amino-acid polypeptide reads, in one-letter code: Maturase K (513 aa).

The protein belongs to the intron maturase 2 family. MatK subfamily.

Its subcellular location is the plastid. The protein localises to the chloroplast. Functionally, usually encoded in the trnK tRNA gene intron. Probably assists in splicing its own and other chloroplast group II introns. This is Maturase K from Pinus resinosa (Red pine).